We begin with the raw amino-acid sequence, 1043 residues long: MPPGVDCPMEFWTKEESQSVVVDFLLPTGVYLNFPVSRNANLSTIKQVLWHRAQYEPLFHMLSDPEAYVFTCVNQTAEQQELEDEQRRLCDIQPFLPVLRLVAREGDRVKKLINSQISLLIGKGLHEFDSLRDPEVNDFRTKMRQFCEEAAAHRQQLGWVEWLQYSFPLQLEPSARGWRAGLLRVSNRALLVNVKFEGSEESFTFQVSTKDMPLALMACALRKKATVFRQPLVEQPEEYALQVNGRHEYLYGNYPLCHFQYICSCLHSGLTPHLTMVHSSSILAMRDEQSNPAPQVQKPRAKPPPIPAKKPSSVSLWSLEQPFSIELIEGRKVNADERMKLVVQAGLFHGNEMLCKTVSSSEVNVCSEPVWKQRLEFDISVCDLPRMARLCFALYAVVEKAKKARSTKKKSKKADCPIAWANLMLFDYKDQLKTGERCLYMWPSVPDEKGELLNPAGTVRGNPNTESAAALVIYLPEVAPHPVYFPALEKILELGRHGERGRITEEELQLREILERRGSGELYEHEKDLVWKMRHEVQEHFPEALARLLLVTKWNKHEDVAQMLYLLCSWPELPVLSALELLDFSFPDCYVGSFAIKSLRKLTDDELFQYLLQLVQVLKYESYLDCELTKFLLGRALANRKIGHFLFWHLRSEMHVPSVALRFGLIMEAYCRGSTHHMKVLMKQGEALSKLKALNDFVKVSSQKTTKPQTKEMMHMCMRQETYMEALSHLQSPLDPSTLLEEVCVEQCTFMDSKMKPLWIMYSSEEAGSAGNVGIIFKNGDDLRQDMLTLQMIQLMDVLWKQEGLDLRMTPYGCLPTGDRTGLIEVVLHSDTIANIQLNKSNMAATAAFNKDALLNWLKSKNPGEALDRAIEEFTLSCAGYCVATYVLGIGDRHSDNIMIRESGQLFHIDFGHFLGNFKTKFGINRERVPFILTYDFVHVIQQGKTNNSEKFERFRGYCERAYTILRRHGLLFLHLFALMRAAGLPELSCSKDIQYLKDSLALGKTEEEALKHFRVKFNEALRESWKTKVNWLAHNVSKDNRQ.

Residues 16-105 (ESQSVVVDFL…LPVLRLVARE (90 aa)) form the PI3K-ABD domain. Positions 187–278 (NRALLVNVKF…GLTPHLTMVH (92 aa)) constitute a PI3K-RBD domain. Residues 287 to 312 (DEQSNPAPQVQKPRAKPPPIPAKKPS) form a disordered region. The C2 PI3K-type domain maps to 319-476 (LEQPFSIELI…SAAALVIYLP (158 aa)). The PIK helical domain maps to 496-673 (RHGERGRITE…GLIMEAYCRG (178 aa)). Phosphotyrosine is present on Tyr-523. A PI3K/PI4K catalytic domain is found at 744–1026 (CVEQCTFMDS…KFNEALRESW (283 aa)). The tract at residues 750 to 756 (FMDSKMK) is G-loop. The segment at 889-897 (GIGDRHSDN) is catalytic loop. The interval 908-934 (HIDFGHFLGNFKTKFGINRERVPFILT) is activation loop. At Ser-1038 the chain carries Phosphoserine; by autocatalysis.

The protein belongs to the PI3/PI4-kinase family. In terms of assembly, heterodimer of a catalytic subunit PIK3CD and a p85 regulatory subunit (PIK3R1, PIK3R2 or PIK3R3). Interacts with ERAS and HRAS. Post-translationally, autophosphorylation on Ser-1038 results in the almost complete inactivation of the lipid kinase activity. Abundantly expressed in adult mouse spleen as well as in testis. Isoform 1 is expressed in spleen and lung (at protein level). Isoform 1 is expressed predominantly in leukocytes.

The protein resides in the cytoplasm. The catalysed reaction is a 1,2-diacyl-sn-glycero-3-phospho-(1D-myo-inositol-4,5-bisphosphate) + ATP = a 1,2-diacyl-sn-glycero-3-phospho-(1D-myo-inositol-3,4,5-trisphosphate) + ADP + H(+). It catalyses the reaction a 1,2-diacyl-sn-glycero-3-phospho-(1D-myo-inositol) + ATP = a 1,2-diacyl-sn-glycero-3-phospho-(1D-myo-inositol-3-phosphate) + ADP + H(+). The enzyme catalyses 1-octadecanoyl-2-(5Z,8Z,11Z,14Z)-eicosatetraenoyl-sn-glycero-3-phospho-1D-myo-inositol 4,5-bisphosphate + ATP = 1-octadecanoyl-2-(5Z,8Z,11Z,14Z-eicosatetraenoyl)-sn-glycero-3-phospho-(1D-myo-inositol 3,4,5-triphosphate) + ADP + H(+). The protein operates within phospholipid metabolism; phosphatidylinositol phosphate biosynthesis. Activated by growth factors and cytokine receptors through a tyrosine-kinase-dependent mechanism. Activated by RAS. IC87114 inhibits lipid kinase activity and is selective in cells at doses up to 5-10 uM. Among other effects, IC87114 reduces allergic responses, prevents the recruitment of antigen-specific T cells into target tissue, and affects natural killer cell chemotaxis. Phosphoinositide-3-kinase (PI3K) phosphorylates phosphatidylinositol (PI) and its phosphorylated derivatives at position 3 of the inositol ring to produce 3-phosphoinositides. Uses ATP and PtdIns(4,5)P2 (phosphatidylinositol 4,5-bisphosphate) to generate phosphatidylinositol 3,4,5-trisphosphate (PIP3). PIP3 plays a key role by recruiting PH domain-containing proteins to the membrane, including AKT1 and PDPK1, activating signaling cascades involved in cell growth, survival, proliferation, motility and morphology. Mediates immune responses. Plays a role in B-cell development, proliferation, migration, and function. Required for B-cell receptor (BCR) signaling. Mediates B-cell proliferation response to anti-IgM, anti-CD40 and IL4 stimulation. Promotes cytokine production in response to TLR4 and TLR9. Required for antibody class switch mediated by TLR9. Involved in the antigen presentation function of B-cells. Involved in B-cell chemotaxis in response to CXCL13 and sphingosine 1-phosphate (S1P). Required for proliferation, signaling and cytokine production of naive, effector and memory T-cells. Required for T-cell receptor (TCR) signaling. Mediates TCR signaling events at the immune synapse. Activation by TCR leads to antigen-dependent memory T-cell migration and retention to antigenic tissues. Together with PIK3CG participates in T-cell development. Contributes to T-helper cell expansion and differentiation. Required for T-cell migration mediated by homing receptors SELL/CD62L, CCR7 and S1PR1 and antigen dependent recruitment of T-cells. Together with PIK3CG is involved in natural killer (NK) cell development and migration towards the sites of inflammation. Participates in NK cell receptor activation. Plays a role in NK cell maturation and cytokine production. Together with PIK3CG is involved in neutrophil chemotaxis and extravasation. Together with PIK3CG participates in neutrophil respiratory burst. Plays important roles in mast-cell development and mast cell mediated allergic response. Involved in stem cell factor (SCF)-mediated proliferation, adhesion and migration. Required for allergen-IgE-induced degranulation and cytokine release. The lipid kinase activity is required for its biological function. This chain is Phosphatidylinositol 4,5-bisphosphate 3-kinase catalytic subunit delta isoform (Pik3cd), found in Mus musculus (Mouse).